Here is a 208-residue protein sequence, read N- to C-terminus: NAD(P)H-quinone oxidoreductase subunit I (208 aa).

4Fe-4S ferredoxin-type domains follow at residues 55-84 (GRIH…VDWV) and 95-124 (RNYS…MTEE). [4Fe-4S] cluster-binding residues include Cys64, Cys67, Cys70, Cys74, Cys104, Cys107, Cys110, and Cys114.

The protein belongs to the complex I 23 kDa subunit family. In terms of assembly, NDH-1 is composed of at least 11 different subunits. Requires [4Fe-4S] cluster as cofactor.

It localises to the cellular thylakoid membrane. The enzyme catalyses a plastoquinone + NADH + (n+1) H(+)(in) = a plastoquinol + NAD(+) + n H(+)(out). It catalyses the reaction a plastoquinone + NADPH + (n+1) H(+)(in) = a plastoquinol + NADP(+) + n H(+)(out). NDH-1 shuttles electrons from an unknown electron donor, via FMN and iron-sulfur (Fe-S) centers, to quinones in the respiratory and/or the photosynthetic chain. The immediate electron acceptor for the enzyme in this species is believed to be plastoquinone. Couples the redox reaction to proton translocation, and thus conserves the redox energy in a proton gradient. This is NAD(P)H-quinone oxidoreductase subunit I from Prochlorococcus marinus (strain MIT 9301).